The sequence spans 206 residues: Small ribosomal subunit protein uS4 (206 aa).

In terms of domain architecture, S4 RNA-binding spans 96 to 161; that stretch reads RRLDNVVYRM…QGRIQAALAL (66 aa).

Belongs to the universal ribosomal protein uS4 family. As to quaternary structure, part of the 30S ribosomal subunit. Contacts protein S5. The interaction surface between S4 and S5 is involved in control of translational fidelity.

Its function is as follows. One of the primary rRNA binding proteins, it binds directly to 16S rRNA where it nucleates assembly of the body of the 30S subunit. With S5 and S12 plays an important role in translational accuracy. This is Small ribosomal subunit protein uS4 from Legionella pneumophila (strain Paris).